The primary structure comprises 236 residues: 2,3,4,5-tetrahydropyridine-2,6-dicarboxylate N-acetyltransferase (236 aa).

It belongs to the transferase hexapeptide repeat family. DapH subfamily.

The enzyme catalyses (S)-2,3,4,5-tetrahydrodipicolinate + acetyl-CoA + H2O = L-2-acetamido-6-oxoheptanedioate + CoA. Its pathway is amino-acid biosynthesis; L-lysine biosynthesis via DAP pathway; LL-2,6-diaminopimelate from (S)-tetrahydrodipicolinate (acetylase route): step 1/3. Functionally, catalyzes the transfer of an acetyl group from acetyl-CoA to tetrahydrodipicolinate. The protein is 2,3,4,5-tetrahydropyridine-2,6-dicarboxylate N-acetyltransferase of Clostridium botulinum (strain Kyoto / Type A2).